The chain runs to 441 residues: Signal recognition particle 54 kDa protein (441 aa).

GTP contacts are provided by residues 104-111 (GLQGSGKT), 186-190 (DTAGR), and 244-247 (TKLD).

It belongs to the GTP-binding SRP family. SRP54 subfamily. As to quaternary structure, part of the signal recognition particle protein translocation system, which is composed of SRP and FtsY. Archaeal SRP consists of a 7S RNA molecule of 300 nucleotides and two protein subunits: SRP54 and SRP19.

The protein resides in the cytoplasm. It carries out the reaction GTP + H2O = GDP + phosphate + H(+). Its function is as follows. Involved in targeting and insertion of nascent membrane proteins into the cytoplasmic membrane. Binds to the hydrophobic signal sequence of the ribosome-nascent chain (RNC) as it emerges from the ribosomes. The SRP-RNC complex is then targeted to the cytoplasmic membrane where it interacts with the SRP receptor FtsY. The protein is Signal recognition particle 54 kDa protein of Staphylothermus marinus (strain ATCC 43588 / DSM 3639 / JCM 9404 / F1).